We begin with the raw amino-acid sequence, 234 residues long: Glucosamine-6-phosphate deaminase (234 aa).

Catalysis depends on Asp62, which acts as the Proton acceptor; for enolization step. The For ring-opening step role is filled by Asn128. His130 (proton acceptor; for ring-opening step) is an active-site residue. Glu135 acts as the For ring-opening step in catalysis.

The protein belongs to the glucosamine/galactosamine-6-phosphate isomerase family. NagB subfamily.

It catalyses the reaction alpha-D-glucosamine 6-phosphate + H2O = beta-D-fructose 6-phosphate + NH4(+). It participates in amino-sugar metabolism; N-acetylneuraminate degradation; D-fructose 6-phosphate from N-acetylneuraminate: step 5/5. Catalyzes the reversible isomerization-deamination of glucosamine 6-phosphate (GlcN6P) to form fructose 6-phosphate (Fru6P) and ammonium ion. This is Glucosamine-6-phosphate deaminase from Streptococcus suis (strain 98HAH33).